A 189-amino-acid polypeptide reads, in one-letter code: Auxin-induced protein IAA4 (189 aa).

The short motif at 8 to 12 (LRLGL) is the EAR-like (transcriptional repression) element. The 88-residue stretch at 92–179 (GIFVKVSMDG…SCKRLRIMKG (88 aa)) folds into the PB1 domain.

Belongs to the Aux/IAA family. Homodimers and heterodimers. Phosphorylated by phytochrome A in vitro.

It is found in the nucleus. Aux/IAA proteins are short-lived transcriptional factors that function as repressors of early auxin response genes at low auxin concentrations. Repression is thought to result from the interaction with auxin response factors (ARFs), proteins that bind to the auxin-responsive promoter element (AuxRE). Formation of heterodimers with ARF proteins may alter their ability to modulate early auxin response genes expression. The chain is Auxin-induced protein IAA4 (IAA4/5) from Pisum sativum (Garden pea).